Here is a 930-residue protein sequence, read N- to C-terminus: Protein translocase subunit SecA (930 aa).

ATP contacts are provided by residues Q83, 101-105 (GEGKT), and D491.

This sequence belongs to the SecA family. In terms of assembly, monomer and homodimer. Part of the essential Sec protein translocation apparatus which comprises SecA, SecYEG and auxiliary proteins SecDF. Other proteins may also be involved.

Its subcellular location is the cell inner membrane. The protein localises to the cellular thylakoid membrane. It is found in the cytoplasm. The enzyme catalyses ATP + H2O + cellular proteinSide 1 = ADP + phosphate + cellular proteinSide 2.. Functionally, part of the Sec protein translocase complex. Interacts with the SecYEG preprotein conducting channel. Has a central role in coupling the hydrolysis of ATP to the transfer of proteins into and across the cell membrane, serving as an ATP-driven molecular motor driving the stepwise translocation of polypeptide chains across the membrane. Its function is as follows. Probably participates in protein translocation into and across both the cytoplasmic and thylakoid membranes in cyanobacterial cells. This Nostoc sp. (strain PCC 7120 / SAG 25.82 / UTEX 2576) protein is Protein translocase subunit SecA.